Consider the following 207-residue polypeptide: 3-isopropylmalate dehydratase small subunit (207 aa).

This sequence belongs to the LeuD family. LeuD type 1 subfamily. Heterodimer of LeuC and LeuD.

It carries out the reaction (2R,3S)-3-isopropylmalate = (2S)-2-isopropylmalate. Its pathway is amino-acid biosynthesis; L-leucine biosynthesis; L-leucine from 3-methyl-2-oxobutanoate: step 2/4. Its function is as follows. Catalyzes the isomerization between 2-isopropylmalate and 3-isopropylmalate, via the formation of 2-isopropylmaleate. This Buchnera aphidicola subsp. Acyrthosiphon pisum (strain APS) (Acyrthosiphon pisum symbiotic bacterium) protein is 3-isopropylmalate dehydratase small subunit (leuD).